A 212-amino-acid chain; its full sequence is Probable NADH dehydrogenase [ubiquinone] iron-sulfur protein 8, mitochondrial (212 aa).

2 4Fe-4S ferredoxin-type domains span residues 104–133 (RRYP…IEAE) and 143–172 (TRYD…EGPN). [4Fe-4S] cluster is bound by residues C113, C116, C119, C123, C152, C155, C158, and C162.

The protein belongs to the complex I 23 kDa subunit family. As to quaternary structure, complex I is composed of 45 different subunits This is a component of the iron-sulfur (IP) fragment of the enzyme. The cofactor is [4Fe-4S] cluster.

It is found in the mitochondrion. The catalysed reaction is a ubiquinone + NADH + 5 H(+)(in) = a ubiquinol + NAD(+) + 4 H(+)(out). Core subunit of the mitochondrial membrane respiratory chain NADH dehydrogenase (Complex I) that is believed to belong to the minimal assembly required for catalysis. Complex I functions in the transfer of electrons from NADH to the respiratory chain. The immediate electron acceptor for the enzyme is believed to be ubiquinone. This is Probable NADH dehydrogenase [ubiquinone] iron-sulfur protein 8, mitochondrial from Caenorhabditis elegans.